The following is a 313-amino-acid chain: UPF0761 membrane protein VS_0126 (313 aa).

6 helical membrane-spanning segments follow: residues 41–61 (YLAYITLLSIVPMLTVLLSIL), 104–124 (MTAVGSVFLFIAALMLISNID), 139–159 (AVLSFSMYWMVLTLGPILIGA), 185–205 (VIRKLPLITSFFAFFGLYLLV), 217–237 (AGSLVAALLFELSKKGFAAYI), and 249–269 (ALAAIPILFVWVYLCWLIVLV). The span at 281–290 (EQWSDSQEMV) shows a compositional bias: polar residues. The disordered stretch occupies residues 281–313 (EQWSDSQEMVHSSDKDKITEQGNNSDSTDPESK).

The protein belongs to the UPF0761 family.

It localises to the cell inner membrane. This is UPF0761 membrane protein VS_0126 from Vibrio atlanticus (strain LGP32) (Vibrio splendidus (strain Mel32)).